The primary structure comprises 164 residues: Putative lung carcinoma-associated protein 10 (164 aa).

Positions 1-164 are disordered; sequence MSSCPVHDCP…TQKPQTTVGQ (164 aa). Positions 23 to 40 are enriched in low complexity; the sequence is GSRGALRLRGGAPGSAAG. Polar residues predominate over residues 152–164; that stretch reads MQKTQKPQTTVGQ.

The chain is Putative lung carcinoma-associated protein 10 (LCA10) from Homo sapiens (Human).